The sequence spans 123 residues: UPF0102 protein CLJ_B2665 (123 aa).

Belongs to the UPF0102 family.

The protein is UPF0102 protein CLJ_B2665 of Clostridium botulinum (strain 657 / Type Ba4).